The chain runs to 284 residues: Bifunctional protein FolD (284 aa).

NADP(+) contacts are provided by residues 166–168 and I232; that span reads GAS.

This sequence belongs to the tetrahydrofolate dehydrogenase/cyclohydrolase family. In terms of assembly, homodimer.

It catalyses the reaction (6R)-5,10-methylene-5,6,7,8-tetrahydrofolate + NADP(+) = (6R)-5,10-methenyltetrahydrofolate + NADPH. It carries out the reaction (6R)-5,10-methenyltetrahydrofolate + H2O = (6R)-10-formyltetrahydrofolate + H(+). Its pathway is one-carbon metabolism; tetrahydrofolate interconversion. Its function is as follows. Catalyzes the oxidation of 5,10-methylenetetrahydrofolate to 5,10-methenyltetrahydrofolate and then the hydrolysis of 5,10-methenyltetrahydrofolate to 10-formyltetrahydrofolate. The chain is Bifunctional protein FolD from Pseudomonas aeruginosa (strain LESB58).